Reading from the N-terminus, the 331-residue chain is Glucokinase (331 aa).

14–19 serves as a coordination point for ATP; sequence GDIGGT.

The protein belongs to the bacterial glucokinase family.

The protein resides in the cytoplasm. It carries out the reaction D-glucose + ATP = D-glucose 6-phosphate + ADP + H(+). The sequence is that of Glucokinase from Aromatoleum aromaticum (strain DSM 19018 / LMG 30748 / EbN1) (Azoarcus sp. (strain EbN1)).